The chain runs to 1103 residues: Voltage-dependent calcium channel subunit alpha-2/delta-1 (1103 aa).

The N-terminal stretch at 1–24 (MAAGCLLALTLTLFQSLLIGPSSE) is a signal peptide. The Extracellular segment spans residues 25–1073 (EPFPSAVTIK…VLEDYTDCGG (1049 aa)). A glycan (N-linked (GlcNAc...) asparagine) is linked at N92. At S119 the chain carries Phosphoserine. 2 N-linked (GlcNAc...) asparagine glycosylation sites follow: N136 and N184. The VWFA domain maps to 253–430 (DMLILVDVSG…INTQEYLDVL (178 aa)). 3 residues coordinate a divalent metal cation: D259, S261, and S263. The MIDAS-like motif motif lies at 259-263 (DVSGS). Residues N324, N348, N468, N475, N604, N613, N675, N781, N824, N888, N895, N985, and N998 are each glycosylated (N-linked (GlcNAc...) asparagine). Residues C404 and C1059 are joined by a disulfide bond. A Cache domain is found at 446–556 (WTNVYLDALE…NIQNPKSQEP (111 aa)). Residues 1074-1094 (VSGLNPSLWYIIGIQFLLLWL) form a helical membrane-spanning segment. The Cytoplasmic segment spans residues 1095-1103 (VSGSTHRLL).

This sequence belongs to the calcium channel subunit alpha-2/delta family. Dimer formed of alpha-2-1 and delta-1 chains; disulfide-linked. Voltage-dependent calcium channels are multisubunit complexes, consisting of alpha-1 (CACNA1), alpha-2 (CACNA2D), beta (CACNB) and delta (CACNA2D) subunits in a 1:1:1:1 ratio. Post-translationally, proteolytically processed into subunits alpha-2-1 and delta-1 that are disulfide-linked. In terms of tissue distribution, isoform 1 is expressed in skeletal muscle. Isoform 2 is expressed in the central nervous system. Isoform 2, isoform 4 and isoform 5 are expressed in neuroblastoma cells. Isoform 3, isoform 4 and isoform 5 are expressed in the aorta.

It localises to the membrane. It is found in the cell membrane. Its function is as follows. The alpha-2/delta subunit of voltage-dependent calcium channels regulates calcium current density and activation/inactivation kinetics of the calcium channel. Plays an important role in excitation-contraction coupling. The sequence is that of Voltage-dependent calcium channel subunit alpha-2/delta-1 (CACNA2D1) from Homo sapiens (Human).